The primary structure comprises 1235 residues: Myosin-1 (1235 aa).

The disordered stretch occupies residues 1–34 (MGITKRSKDKAARAERSAGGDKSSSAKPKKATFD). Over residues 9-19 (DKAARAERSAG) the composition is skewed to basic and acidic residues. The 675-residue stretch at 41–715 (IGVSDLTLLS…TLFALEHMRD (675 aa)) folds into the Myosin motor domain. An ATP-binding site is contributed by 134–141 (GESGAGKT). The segment at 405 to 487 (SIGILDIYGF…PGIFSAMKDA (83 aa)) is actin-binding. IQ domains are found at residues 719–739 (HNMATRIQRMWRAYLAYRAEA) and 740–765 (AIRIQRIWRKKRVGAEYLQLREEGHK). The 190-residue stretch at 773 to 962 (RRRMSILGSR…TVHTQPGEPP (190 aa)) folds into the TH1 domain. Disordered stretches follow at residues 949 to 1076 (YKSS…AAKP) and 1135 to 1235 (APPV…EDDW). A compositionally biased stretch (low complexity) spans 982–1046 (KGKLIKPGGP…PGAAATPAAA (65 aa)). Residues 1050 to 1062 (PSHTRQQSSTSTV) show a composition bias toward polar residues. Positions 1063–1073 (RPPPPPPPAPA) are enriched in pro residues. An SH3 domain is found at 1075–1134 (KPKIMAKVLYDFAGTRENELSIKAGDMIEIVQKENNGWWLAKTPEGQAWVPAAYVEEQAP). Over residues 1135–1150 (APPVVAPRPPPPPPPA) the composition is skewed to pro residues. Polar residues predominate over residues 1180 to 1210 (SLQNRDSGMSLNGANGSGSDASRSSTPTPSI).

This sequence belongs to the TRAFAC class myosin-kinesin ATPase superfamily. Myosin family.

It is found in the cytoplasm. The protein resides in the cytoskeleton. Its subcellular location is the actin patch. Type-I myosin implicated in the organization of the actin cytoskeleton. Required for proper actin cytoskeleton polarization. At the cell cortex, assembles in patch-like structures together with proteins from the actin-polymerizing machinery and promotes actin assembly. Functions as actin nucleation-promoting factor (NPF) for the Arp2/3 complex. In Neurospora crassa (strain ATCC 24698 / 74-OR23-1A / CBS 708.71 / DSM 1257 / FGSC 987), this protein is Myosin-1 (myo-1).